The sequence spans 93 residues: Integration host factor subunit beta (93 aa).

The protein belongs to the bacterial histone-like protein family. Heterodimer of an alpha and a beta chain.

In terms of biological role, this protein is one of the two subunits of integration host factor, a specific DNA-binding protein that functions in genetic recombination as well as in transcriptional and translational control. This chain is Integration host factor subunit beta, found in Glaesserella parasuis serovar 5 (strain SH0165) (Haemophilus parasuis).